We begin with the raw amino-acid sequence, 478 residues long: Ribosomal RNA small subunit methyltransferase F (478 aa).

Residues 123 to 129, glutamate 147, aspartate 174, and aspartate 192 contribute to the S-adenosyl-L-methionine site; that span reads AAAPGSK. The active-site Nucleophile is cysteine 245.

Belongs to the class I-like SAM-binding methyltransferase superfamily. RsmB/NOP family.

Its subcellular location is the cytoplasm. The catalysed reaction is cytidine(1407) in 16S rRNA + S-adenosyl-L-methionine = 5-methylcytidine(1407) in 16S rRNA + S-adenosyl-L-homocysteine + H(+). Its function is as follows. Specifically methylates the cytosine at position 1407 (m5C1407) of 16S rRNA. This Vibrio parahaemolyticus serotype O3:K6 (strain RIMD 2210633) protein is Ribosomal RNA small subunit methyltransferase F.